The primary structure comprises 169 residues: GTP-dependent dephospho-CoA kinase (169 aa).

Residues Asp-45, Asp-64, and Glu-121 each contribute to the GTP site.

It belongs to the GTP-dependent DPCK family.

It catalyses the reaction 3'-dephospho-CoA + GTP = GDP + CoA + H(+). Its pathway is cofactor biosynthesis; coenzyme A biosynthesis. Catalyzes the GTP-dependent phosphorylation of the 3'-hydroxyl group of dephosphocoenzyme A to form coenzyme A (CoA). This Methanobrevibacter smithii (strain ATCC 35061 / DSM 861 / OCM 144 / PS) protein is GTP-dependent dephospho-CoA kinase.